Reading from the N-terminus, the 187-residue chain is Isopentenyl-diphosphate Delta-isomerase (187 aa).

Mn(2+) is bound by residues histidine 36, histidine 43, and histidine 80. The region spanning 41 to 178 (VRHRAFTALL…RQLRLCPWFE (138 aa)) is the Nudix hydrolase domain. Mg(2+) is bound at residue glutamate 98. Mn(2+)-binding residues include glutamate 127 and glutamate 129. Glutamate 129 is a catalytic residue.

It belongs to the IPP isomerase type 1 family. It depends on Mg(2+) as a cofactor. Mn(2+) is required as a cofactor.

Its subcellular location is the cytoplasm. The enzyme catalyses isopentenyl diphosphate = dimethylallyl diphosphate. It participates in isoprenoid biosynthesis; dimethylallyl diphosphate biosynthesis; dimethylallyl diphosphate from isopentenyl diphosphate: step 1/1. Functionally, catalyzes the 1,3-allylic rearrangement of the homoallylic substrate isopentenyl (IPP) to its highly electrophilic allylic isomer, dimethylallyl diphosphate (DMAPP). This chain is Isopentenyl-diphosphate Delta-isomerase, found in Haloarcula marismortui (strain ATCC 43049 / DSM 3752 / JCM 8966 / VKM B-1809) (Halobacterium marismortui).